A 501-amino-acid polypeptide reads, in one-letter code: Lysine--tRNA ligase (501 aa).

The Mg(2+) site is built by glutamate 410 and glutamate 417.

It belongs to the class-II aminoacyl-tRNA synthetase family. Homodimer. It depends on Mg(2+) as a cofactor.

It is found in the cytoplasm. The enzyme catalyses tRNA(Lys) + L-lysine + ATP = L-lysyl-tRNA(Lys) + AMP + diphosphate. The sequence is that of Lysine--tRNA ligase from Shewanella halifaxensis (strain HAW-EB4).